The primary structure comprises 396 residues: S-adenosylmethionine synthase (396 aa).

His-16 is a binding site for ATP. Asp-18 contacts Mg(2+). Glu-44 provides a ligand contact to K(+). 2 residues coordinate L-methionine: Glu-57 and Gln-100. A flexible loop region spans residues 100-110 (QSVDIAQGVDR). Residues 165–167 (DAK), Asp-240, 246–247 (RK), Ala-263, and Lys-267 contribute to the ATP site. Residue Asp-240 coordinates L-methionine. Lys-271 is an L-methionine binding site.

The protein belongs to the AdoMet synthase family. In terms of assembly, homotetramer; dimer of dimers. Mg(2+) is required as a cofactor. Requires K(+) as cofactor.

It is found in the cytoplasm. The enzyme catalyses L-methionine + ATP + H2O = S-adenosyl-L-methionine + phosphate + diphosphate. The protein operates within amino-acid biosynthesis; S-adenosyl-L-methionine biosynthesis; S-adenosyl-L-methionine from L-methionine: step 1/1. Catalyzes the formation of S-adenosylmethionine (AdoMet) from methionine and ATP. The overall synthetic reaction is composed of two sequential steps, AdoMet formation and the subsequent tripolyphosphate hydrolysis which occurs prior to release of AdoMet from the enzyme. In Stutzerimonas stutzeri (strain A1501) (Pseudomonas stutzeri), this protein is S-adenosylmethionine synthase.